A 351-amino-acid polypeptide reads, in one-letter code: Fruit bromelain (351 aa).

The N-terminal stretch at 1-24 (MASKVQLVFLFLFLCAMWASPSAA) is a signal peptide. Residues 25–121 (SRDEPNDPMM…VVSFDDVNIS (97 aa)) constitute a propeptide, activation peptide. Asparagine 119 carries N-linked (GlcNAc...) asparagine glycosylation. 3 cysteine pairs are disulfide-bonded: cysteine 144/cysteine 184, cysteine 178/cysteine 217, and cysteine 273/cysteine 325. The active site involves cysteine 147. Active-site residues include histidine 279 and asparagine 300.

This sequence belongs to the peptidase C1 family.

The catalysed reaction is Hydrolysis of proteins with broad specificity for peptide bonds. Bz-Phe-Val-Arg-|-NHMec is a good synthetic substrate, but there is no action on Z-Arg-Arg-|-NHMec (cf. stem bromelain).. Cysteine proteinase with a high level of diversity in substrate specificity. This chain is Fruit bromelain, found in Ananas comosus (Pineapple).